The sequence spans 304 residues: UDP-3-O-acyl-N-acetylglucosamine deacetylase (304 aa).

Histidine 78, histidine 237, and aspartate 241 together coordinate Zn(2+). Histidine 264 (proton donor) is an active-site residue.

This sequence belongs to the LpxC family. Requires Zn(2+) as cofactor.

The enzyme catalyses a UDP-3-O-[(3R)-3-hydroxyacyl]-N-acetyl-alpha-D-glucosamine + H2O = a UDP-3-O-[(3R)-3-hydroxyacyl]-alpha-D-glucosamine + acetate. Its pathway is glycolipid biosynthesis; lipid IV(A) biosynthesis; lipid IV(A) from (3R)-3-hydroxytetradecanoyl-[acyl-carrier-protein] and UDP-N-acetyl-alpha-D-glucosamine: step 2/6. In terms of biological role, catalyzes the hydrolysis of UDP-3-O-myristoyl-N-acetylglucosamine to form UDP-3-O-myristoylglucosamine and acetate, the committed step in lipid A biosynthesis. This Polynucleobacter asymbioticus (strain DSM 18221 / CIP 109841 / QLW-P1DMWA-1) (Polynucleobacter necessarius subsp. asymbioticus) protein is UDP-3-O-acyl-N-acetylglucosamine deacetylase.